A 181-amino-acid chain; its full sequence is Translationally-controlled tumor protein homolog (181 aa).

Positions methionine 1 to cysteine 181 constitute a TCTP domain.

It belongs to the TCTP family.

The protein resides in the cytoplasm. Functionally, involved in calcium binding and microtubule stabilization. The sequence is that of Translationally-controlled tumor protein homolog (tct-1) from Caenorhabditis briggsae.